A 408-amino-acid polypeptide reads, in one-letter code: Aspartate aminotransferase (408 aa).

Residues G45, W134, and N184 each contribute to the L-aspartate site. K247 carries the post-translational modification N6-(pyridoxal phosphate)lysine. R382 is a binding site for L-aspartate.

It belongs to the class-I pyridoxal-phosphate-dependent aminotransferase family. As to quaternary structure, homodimer. Requires pyridoxal 5'-phosphate as cofactor.

It is found in the cytoplasm. The catalysed reaction is L-aspartate + 2-oxoglutarate = oxaloacetate + L-glutamate. Its function is as follows. Catalyzes the reversible conversion of aspartate and 2-oxoglutarate to glutamate and oxaloacetate. Does not have prephenate aminotransferase activity. In Streptomyces avermitilis (strain ATCC 31267 / DSM 46492 / JCM 5070 / NBRC 14893 / NCIMB 12804 / NRRL 8165 / MA-4680), this protein is Aspartate aminotransferase.